Reading from the N-terminus, the 458-residue chain is Exodeoxyribonuclease 7 large subunit (458 aa).

It belongs to the XseA family. As to quaternary structure, heterooligomer composed of large and small subunits.

Its subcellular location is the cytoplasm. The catalysed reaction is Exonucleolytic cleavage in either 5'- to 3'- or 3'- to 5'-direction to yield nucleoside 5'-phosphates.. Functionally, bidirectionally degrades single-stranded DNA into large acid-insoluble oligonucleotides, which are then degraded further into small acid-soluble oligonucleotides. This is Exodeoxyribonuclease 7 large subunit from Escherichia coli O81 (strain ED1a).